The following is a 343-amino-acid chain: N-acetyl-gamma-glutamyl-phosphate reductase (343 aa).

Cys146 is an active-site residue.

It belongs to the NAGSA dehydrogenase family. Type 1 subfamily.

It is found in the cytoplasm. The enzyme catalyses N-acetyl-L-glutamate 5-semialdehyde + phosphate + NADP(+) = N-acetyl-L-glutamyl 5-phosphate + NADPH + H(+). The protein operates within amino-acid biosynthesis; L-arginine biosynthesis; N(2)-acetyl-L-ornithine from L-glutamate: step 3/4. Functionally, catalyzes the NADPH-dependent reduction of N-acetyl-5-glutamyl phosphate to yield N-acetyl-L-glutamate 5-semialdehyde. This is N-acetyl-gamma-glutamyl-phosphate reductase from Pseudarthrobacter chlorophenolicus (strain ATCC 700700 / DSM 12829 / CIP 107037 / JCM 12360 / KCTC 9906 / NCIMB 13794 / A6) (Arthrobacter chlorophenolicus).